A 370-amino-acid chain; its full sequence is Mitogen-activated protein kinase mpkC (370 aa).

The Protein kinase domain maps to 19–298 (YANVRPVGLG…AAESLEHPYL (280 aa)). ATP contacts are provided by residues 25–33 (VGLGAFGLV) and K48. D140 (proton acceptor) is an active-site residue. T170 carries the post-translational modification Phosphothreonine. The short motif at 170–172 (TGY) is the TXY element. Residue Y172 is modified to Phosphotyrosine.

It belongs to the protein kinase superfamily. Ser/Thr protein kinase family. MAP kinase subfamily. HOG1 sub-subfamily. Requires Mg(2+) as cofactor. In terms of processing, dually phosphorylated on Thr-170 and Tyr-172, which activates the enzyme.

The enzyme catalyses L-seryl-[protein] + ATP = O-phospho-L-seryl-[protein] + ADP + H(+). It catalyses the reaction L-threonyl-[protein] + ATP = O-phospho-L-threonyl-[protein] + ADP + H(+). With respect to regulation, activated by tyrosine and threonine phosphorylation. Functionally, mitogen-activated protein kinase required for growth on media where sorbitol or mannitol is the sole carbon source. This is Mitogen-activated protein kinase mpkC (mpkC) from Aspergillus terreus (strain NIH 2624 / FGSC A1156).